The chain runs to 1083 residues: Rho GTPase-activating protein 39 (1083 aa).

At S2 the chain carries N-acetylserine. WW domains follow at residues 25–58 (NTRL…PPAG) and 63–97 (RTSE…RPQG). The tract at residues 110–154 (KQNTESPRASAESSPGRGSSVSREGSTSSSLEPEPDTEKAQELPA) is disordered. Residues 117–141 (RASAESSPGRGSSVSREGSTSSSLE) are compositionally biased toward low complexity. A Phosphoserine modification is found at S169. Positions 226–369 (AAQGNGYAPD…NKQGPPSPCQ (144 aa)) are disordered. Over residues 245–256 (PSGSQHSPSLQT) the composition is skewed to polar residues. Residues 268-280 (PERRPSPFLKRAE) are compositionally biased toward basic and acidic residues. Residues S286, S384, S388, S406, and S407 each carry the phosphoserine modification. Disordered stretches follow at residues 405-545 (GSSP…EAEG) and 570-599 (MKQR…PGPV). Polar residues-rich tracts occupy residues 474–488 (SWSS…TGYS) and 573–582 (RSSWDSQQDG). A phosphoserine mark is found at S604, S690, S715, and S726. Residues 722–879 (WSSESIKKPM…PNVEEIRHAK (158 aa)) form the MyTH4 domain. The region spanning 890–1078 (SALQEVMGMQ…VLIQHLDTSF (189 aa)) is the Rho-GAP domain.

It localises to the nucleus. The chain is Rho GTPase-activating protein 39 (ARHGAP39) from Homo sapiens (Human).